Consider the following 93-residue polypeptide: Small ribosomal subunit protein bS18 (93 aa).

The protein belongs to the bacterial ribosomal protein bS18 family. Part of the 30S ribosomal subunit. Forms a tight heterodimer with protein bS6.

In terms of biological role, binds as a heterodimer with protein bS6 to the central domain of the 16S rRNA, where it helps stabilize the platform of the 30S subunit. In Delftia acidovorans (strain DSM 14801 / SPH-1), this protein is Small ribosomal subunit protein bS18.